The sequence spans 391 residues: Winged helix repair factor 1 (391 aa).

Low complexity-rich tracts occupy residues 1-24 and 49-63; these read MNIK…PSPI and LSFN…SNIN. Positions 1 to 95 are disordered; that stretch reads MNIKRNQNNS…SITTTTATST (95 aa). Residues 64-74 show a composition bias toward acidic residues; that stretch reads GEEDNDDDDRE. Residues 82-95 are compositionally biased toward low complexity; the sequence is NPNPSITTTTATST.

The protein belongs to the STK19 family.

It is found in the nucleus. In terms of biological role, DNA-binding protein which is required for efficient transcription-coupled nucleotide excision repair. This chain is Winged helix repair factor 1, found in Dictyostelium discoideum (Social amoeba).